The chain runs to 162 residues: MTNFTHINKQGNAKMVDVSNKEITKRVAEAHSSIIVNEKIYSQITQNTNSKGNVLNTAQIAGIMAAKNTSTIIPMCHPLPLTGIDISFKWDSNNDDSYRLNITAVVSTTGKTGVEMEALTAASVTALTIYDMTKAIDKGMIIGETYLESKSGGKSGDFHRKN.

Residues 75–77 and 116–117 contribute to the substrate site; these read MCH and ME. Aspartate 131 is a catalytic residue.

It belongs to the MoaC family. In terms of assembly, homohexamer; trimer of dimers.

The enzyme catalyses (8S)-3',8-cyclo-7,8-dihydroguanosine 5'-triphosphate = cyclic pyranopterin phosphate + diphosphate. It functions in the pathway cofactor biosynthesis; molybdopterin biosynthesis. Its function is as follows. Catalyzes the conversion of (8S)-3',8-cyclo-7,8-dihydroguanosine 5'-triphosphate to cyclic pyranopterin monophosphate (cPMP). The protein is Cyclic pyranopterin monophosphate synthase of Staphylococcus epidermidis (strain ATCC 35984 / DSM 28319 / BCRC 17069 / CCUG 31568 / BM 3577 / RP62A).